The sequence spans 266 residues: Apolipoprotein A-I (266 aa).

An N-terminal signal peptide occupies residues 1-18; that stretch reads MKAVVLTLAVLFLTGSQA. Tandem repeats lie at residues 67-88 and 89-110. The segment at 67–266 is 10 X approximate tandem repeats; it reads LKLLDNWDTL…DEATKKLNAQ (200 aa). Met109 is subject to Methionine sulfoxide. The stretch at 111–121 is one 3; half-length repeat; it reads KDLEEVKQKVQ. A run of 5 repeats spans residues 122–143, 144–165, 166–187, 188–209, and 210–231. Residues 232–242 form a 9; half-length repeat; the sequence is PALEDLRQGLL. Copy 10 of the repeat occupies 243–266; it reads PVLESFKVGLMAIVDEATKKLNAQ.

This sequence belongs to the apolipoprotein A1/A4/E family. As to quaternary structure, homodimer. Interacts with APOA1BP and CLU. Component of a sperm activating protein complex (SPAP), consisting of APOA1, an immunoglobulin heavy chain, an immunoglobulin light chain and albumin. Interacts with NDRG1. Interacts with SCGB3A2. Interacts with NAXE and YJEFN3. Glycosylated. In terms of processing, palmitoylated. Post-translationally, phosphorylation sites are present in the extracellular medium.

It is found in the secreted. Its function is as follows. Participates in the reverse transport of cholesterol from tissues to the liver for excretion by promoting cholesterol efflux from tissues and by acting as a cofactor for the lecithin cholesterol acyltransferase (LCAT). As part of the SPAP complex, activates spermatozoa motility. This is Apolipoprotein A-I (APOA1) from Acinonyx jubatus (Cheetah).